The following is a 1748-amino-acid chain: Flagellar attachment zone protein 1 (1748 aa).

Coiled coils occupy residues 613–657, 684–864, and 903–1663; these read REQE…KLQK, VTLD…HKVR, and NDHM…SALE. A run of 41 repeats spans residues 1012–1025, 1026–1039, 1040–1053, 1054–1067, 1068–1081, 1082–1095, 1096–1109, 1110–1123, 1124–1137, 1138–1151, 1152–1165, 1166–1179, 1180–1193, 1194–1207, 1208–1221, 1222–1235, 1236–1249, 1250–1263, 1264–1277, 1278–1291, 1292–1305, 1306–1319, 1320–1333, 1334–1347, 1348–1361, 1362–1375, 1376–1389, 1390–1403, 1404–1417, 1418–1431, 1432–1445, 1446–1459, 1460–1473, 1474–1487, 1488–1501, 1502–1515, 1516–1529, 1530–1543, 1544–1557, 1558–1571, and 1572–1585. Residues 1012–1529 are 41 X 14 AA tandem repeats of E-E-L-E-L-K-[VA]-A-E-N-E-K-L-A; that stretch reads EELELKAAEN…LKAAENEKLA (518 aa).

Its subcellular location is the cell projection. The protein localises to the cilium. It is found in the flagellum. Its function is as follows. A component of FAZ filament that is required for correct FAZ assembly and attachment. Not essential for new flagellum growth. The sequence is that of Flagellar attachment zone protein 1 from Trypanosoma brucei gambiense (strain MHOM/CI/86/DAL972).